The following is a 217-amino-acid chain: Mediator of RNA polymerase II transcription subunit 18 (217 aa).

The protein belongs to the Mediator complex subunit 18 family. Component of the Mediator complex, which includes at least CDK8, MED4, MED6, MED11, MED14, MED17, MED18, MED20, MED21, MED22, MED27, MED28, MED30 and MED31.

The protein localises to the nucleus. In terms of biological role, component of the Mediator complex, a coactivator involved in the regulated transcription of nearly all RNA polymerase II-dependent genes. Mediator functions as a bridge to convey information from gene-specific regulatory proteins to the basal RNA polymerase II transcription machinery. Mediator is recruited to promoters by direct interactions with regulatory proteins and serves as a scaffold for the assembly of a functional preinitiation complex with RNA polymerase II and the general transcription factors. The sequence is that of Mediator of RNA polymerase II transcription subunit 18 (MED18) from Drosophila melanogaster (Fruit fly).